We begin with the raw amino-acid sequence, 547 residues long: Chaperonin GroEL (547 aa).

ATP is bound by residues 30-33 (TLGP), Lys51, 87-91 (DGTTT), Gly415, 479-481 (NAA), and Asp495.

Belongs to the chaperonin (HSP60) family. In terms of assembly, forms a cylinder of 14 subunits composed of two heptameric rings stacked back-to-back. Interacts with the co-chaperonin GroES.

Its subcellular location is the cytoplasm. The enzyme catalyses ATP + H2O + a folded polypeptide = ADP + phosphate + an unfolded polypeptide.. Together with its co-chaperonin GroES, plays an essential role in assisting protein folding. The GroEL-GroES system forms a nano-cage that allows encapsulation of the non-native substrate proteins and provides a physical environment optimized to promote and accelerate protein folding. The chain is Chaperonin GroEL from Pseudomonas syringae pv. syringae (strain B728a).